The sequence spans 358 residues: Alanine racemase (358 aa).

The active-site Proton acceptor; specific for D-alanine is the Lys-35. At Lys-35 the chain carries N6-(pyridoxal phosphate)lysine. Arg-130 provides a ligand contact to substrate. Tyr-255 (proton acceptor; specific for L-alanine) is an active-site residue. Residue Met-303 coordinates substrate.

This sequence belongs to the alanine racemase family. Requires pyridoxal 5'-phosphate as cofactor.

The enzyme catalyses L-alanine = D-alanine. Its pathway is amino-acid biosynthesis; D-alanine biosynthesis; D-alanine from L-alanine: step 1/1. Catalyzes the interconversion of L-alanine and D-alanine. May also act on other amino acids. In Shewanella baltica (strain OS185), this protein is Alanine racemase (alr).